The chain runs to 566 residues: FAD-dependent monooxygenase asqG (566 aa).

The signal sequence occupies residues 1 to 19 (MAAFTVIIIGGSISGLTLA). FAD is bound by residues glutamate 33, valine 47, arginine 113, aspartate 313, and alanine 326. 2 helical membrane-spanning segments follow: residues 448–468 (ASST…GAVW) and 482–502 (GYTL…ASAV).

It belongs to the paxM FAD-dependent monooxygenase family. FAD serves as cofactor.

The protein resides in the membrane. The enzyme catalyses [(1'E)-3'-hydroxy-3',7'-dimethylocta-1',6'-dien-1'-yl]-quinolinone B + NADPH + O2 + H(+) = [(1'E)-5'-(3',3'-dimethyloxiran-2'-yl)-3'-hydroxy-3'-methylpent-1'-en-1'-yl]-quinolinone B + NADP(+) + H2O. It functions in the pathway secondary metabolite biosynthesis. It participates in alkaloid biosynthesis. Its pathway is mycotoxin biosynthesis. Its function is as follows. FAD-dependent monooxygenase; part of the gene cluster that mediates the biosynthesis of the aspoquinolone mycotoxins. Within the pathway, the FAD-dependent monooxygenase asqG catalyzes the epoxidation of the terminal C7'-C8' olefin to produce the intermediate [(1'E)-5'-(3',3'-dimethyloxiran-2'-yl)-3'-hydroxy-3'-methylpent-1'-en-1'-yl]-quinolinone B. The first step of the pathway is catalyzed by the nonribosomal peptide synthetase asqK that condenses anthranilic acid and O-methyl-L-tyrosine to produce 4'-methoxycyclopeptin. 4'-methoxycyclopeptin is then converted to 4'-methoxydehydrocyclopeptin by the ketoglutarate-dependent dioxygenase asqJ. AsqJ also converts its first product 4'-methoxydehydrocyclopeptin to 4'-methoxycyclopenin. The following conversion of 4'-methoxycyclopenin into 4'-methoxyviridicatin is catalyzed by the cyclopenase asqI. 4'-methoxyviridicatin is the precursor of quinolone natural products, and is further converted to quinolinone B. The prenyltransferase asqH1 then catalyzes the canonical Friedel-Crafts alkylation of quinolinone B with dimethylallyl cation to yield dimethylallyl quinolone, which is subjected to FAD-dependent dehydrogenation by the FAD-linked oxidoreductase asqF to yield conjugated aryl diene. The delta(3') double bond then serves as the site of the second alkylation with DMAPP catalyzed by the prenyltransferase asqH2 to yield a carbenium ion intermediate, which can be attacked by H(2)O to yield a styrenyl quinolone containing a C3'-hydroxyprenyl chain. The FAD-dependent monooxygenase asqG performs epoxidation of the terminal C7'-C8' olefin. Finally, after dehydratation of the epoxide at C3 by asqC, the quinolone epoxide rearrangement protein asqO catalyzes an enzymatic 3-exo-tet cyclization to yield the cyclopropyl-THF ring system in aspoquinolone. In Emericella nidulans (strain FGSC A4 / ATCC 38163 / CBS 112.46 / NRRL 194 / M139) (Aspergillus nidulans), this protein is FAD-dependent monooxygenase asqG.